The following is a 194-amino-acid chain: Probable calcium-binding protein CML45 (194 aa).

Over residues 52-63 (NNKDQQETLTKQ) the composition is skewed to basic and acidic residues. Residues 52–81 (NNKDQQETLTKQEDDDDDDDDDDDDDDDDI) are disordered. The segment covering 64-81 (EDDDDDDDDDDDDDDDDI) has biased composition (acidic residues). EF-hand domains lie at 76–98 (DDDD…LGLF), 122–157 (ASLE…LGFK), and 160–194 (SYLD…TSFY). 9 residues coordinate Ca(2+): aspartate 135, asparagine 137, aspartate 139, glutamate 146, aspartate 173, asparagine 175, aspartate 177, lysine 179, and glutamate 184.

In terms of biological role, potential calcium sensor. The protein is Probable calcium-binding protein CML45 of Arabidopsis thaliana (Mouse-ear cress).